The primary structure comprises 560 residues: Poly(3-hydroxyalkanoate) polymerase 2 (560 aa).

Cysteine 296 is an active-site residue.

The protein belongs to the PHA/PHB synthase family. Type II PhaC subfamily.

The protein operates within biopolymer metabolism; poly-(R)-3-hydroxybutanoate biosynthesis. Synthesizes poly(3-hydroxyalkanoates) (PHA), complements a mutant of P.putida that does not make PHA. This chain is Poly(3-hydroxyalkanoate) polymerase 2, found in Ectopseudomonas oleovorans (Pseudomonas oleovorans).